Reading from the N-terminus, the 504-residue chain is Catalase (504 aa).

Active-site residues include histidine 56 and asparagine 129. Tyrosine 339 serves as a coordination point for heme.

Belongs to the catalase family. In terms of assembly, homodimer. The cofactor is heme.

The enzyme catalyses 2 H2O2 = O2 + 2 H2O. Decomposes hydrogen peroxide into water and oxygen; serves to protect cells from the toxic effects of hydrogen peroxide. The polypeptide is Catalase (katA) (Staphylococcus epidermidis).